A 97-amino-acid polypeptide reads, in one-letter code: Large ribosomal subunit protein bL28 (97 aa).

This sequence belongs to the bacterial ribosomal protein bL28 family.

This Rickettsia akari (strain Hartford) protein is Large ribosomal subunit protein bL28.